A 322-amino-acid polypeptide reads, in one-letter code: NADH-cytochrome b5 reductase 2 (322 aa).

Residues 30 to 46 (LAPVYVAVGLAGLGVGL) traverse the membrane as a helical segment. The FAD-binding FR-type domain occupies 71-176 (QGWVNLKLSD…KGPLPKYPWE (106 aa)). An FAD-binding site is contributed by 179–214 (KHKHICLVAGGTGITPMYQLAREIFKNPEDKTKVTL).

The protein belongs to the flavoprotein pyridine nucleotide cytochrome reductase family. The cofactor is FAD.

It is found in the mitochondrion outer membrane. The catalysed reaction is 2 Fe(III)-[cytochrome b5] + NADH = 2 Fe(II)-[cytochrome b5] + NAD(+) + H(+). May mediate the reduction of outer membrane cytochrome b5. The chain is NADH-cytochrome b5 reductase 2 (mcr1) from Emericella nidulans (strain FGSC A4 / ATCC 38163 / CBS 112.46 / NRRL 194 / M139) (Aspergillus nidulans).